The following is a 387-amino-acid chain: Phosphoglycerate kinase (387 aa).

Residues 21–23, Arg-36, 59–62, Arg-113, and Arg-146 each bind substrate; these read DLN and HLGR. Residues Lys-197, Glu-314, and 340–343 each bind ATP; that span reads GGDT.

Belongs to the phosphoglycerate kinase family. Monomer.

It localises to the cytoplasm. It carries out the reaction (2R)-3-phosphoglycerate + ATP = (2R)-3-phospho-glyceroyl phosphate + ADP. It participates in carbohydrate degradation; glycolysis; pyruvate from D-glyceraldehyde 3-phosphate: step 2/5. The polypeptide is Phosphoglycerate kinase (Yersinia enterocolitica serotype O:8 / biotype 1B (strain NCTC 13174 / 8081)).